A 164-amino-acid chain; its full sequence is ATP synthase B' chain, cyanelle (164 aa).

A helical transmembrane segment spans residues 26–46 (ATLPVMMVQLLVLMLILNAVF).

Belongs to the ATPase B chain family. As to quaternary structure, F-type ATPases have 2 components, F(1) - the catalytic core - and F(0) - the membrane proton channel. F(1) has five subunits: alpha(3), beta(3), gamma(1), delta(1), epsilon(1). F(0) has four main subunits: a(1), b(1), b'(1) and c(10-14). The alpha and beta chains form an alternating ring which encloses part of the gamma chain. F(1) is attached to F(0) by a central stalk formed by the gamma and epsilon chains, while a peripheral stalk is formed by the delta, b and b' chains.

The protein localises to the plastid. It localises to the cyanelle thylakoid membrane. Functionally, f(1)F(0) ATP synthase produces ATP from ADP in the presence of a proton or sodium gradient. F-type ATPases consist of two structural domains, F(1) containing the extramembraneous catalytic core and F(0) containing the membrane proton channel, linked together by a central stalk and a peripheral stalk. During catalysis, ATP synthesis in the catalytic domain of F(1) is coupled via a rotary mechanism of the central stalk subunits to proton translocation. Its function is as follows. Component of the F(0) channel, it forms part of the peripheral stalk, linking F(1) to F(0). The b'-subunit is a diverged and duplicated form of b found in plants and photosynthetic bacteria. The chain is ATP synthase B' chain, cyanelle from Cyanophora paradoxa.